Consider the following 38-residue polypeptide: Mu/omega-theraphotoxin-Mb1a (38 aa).

3 cysteine pairs are disulfide-bonded: cysteine 7–cysteine 21, cysteine 14–cysteine 26, and cysteine 20–cysteine 33. At threonine 38 the chain carries Threonine amide.

This sequence belongs to the neurotoxin 10 (Hwtx-1) family. 28 (Jztx-11) subfamily. Expressed by the venom gland.

It is found in the secreted. Functionally, paralytic toxin that inhibits insect voltage-gated sodium (Nav) and calcium (Cav) channels in P.americana (American cockroach) dorsal unpaired median (DUM) neurons, and inhibits the B.germanica (German cockroach) Nav channel (BgNaV1). Also shows a delay in fast inactivation when tested on BgNaV1. May act as a gating-modifier toxin on Nav and as a pore blocker on Cav. In vivo, reversibly paralyzes both L.cuprina (Australian sheep blowfly) and M.domestica (housefly), but does not affect larvae of H.armigera (cotton bollworms). This is Mu/omega-theraphotoxin-Mb1a from Monocentropus balfouri (Socotra Island blue baboon tarantula).